The sequence spans 180 residues: ATP synthase subunit b 2 (180 aa).

A helical transmembrane segment spans residues 33 to 53 (IFWLLVTLVAIYFLLTRVALP).

It belongs to the ATPase B chain family. F-type ATPases have 2 components, F(1) - the catalytic core - and F(0) - the membrane proton channel. F(1) has five subunits: alpha(3), beta(3), gamma(1), delta(1), epsilon(1). F(0) has three main subunits: a(1), b(2) and c(10-14). The alpha and beta chains form an alternating ring which encloses part of the gamma chain. F(1) is attached to F(0) by a central stalk formed by the gamma and epsilon chains, while a peripheral stalk is formed by the delta and b chains.

It is found in the cell inner membrane. Functionally, f(1)F(0) ATP synthase produces ATP from ADP in the presence of a proton or sodium gradient. F-type ATPases consist of two structural domains, F(1) containing the extramembraneous catalytic core and F(0) containing the membrane proton channel, linked together by a central stalk and a peripheral stalk. During catalysis, ATP synthesis in the catalytic domain of F(1) is coupled via a rotary mechanism of the central stalk subunits to proton translocation. Its function is as follows. Component of the F(0) channel, it forms part of the peripheral stalk, linking F(1) to F(0). The b'-subunit is a diverged and duplicated form of b found in plants and photosynthetic bacteria. The protein is ATP synthase subunit b 2 (atpF2) of Cereibacter sphaeroides (strain ATCC 17025 / ATH 2.4.3) (Rhodobacter sphaeroides).